Consider the following 762-residue polypeptide: MSSSSVVDHSPHDSAPSPLVPTASNLILIDNYDSFTWNVYQYLVLEGAKVTVFRNDQITIDELIAKNPTQLVISPGPGHPGTDSGISRDAIRHFAGKIPIFGVCMGQQCIFDVYGGDVCFAGEILHGKTSPLRHDGKGAYAGLSQDLPVTRYHSLAGTHVTLPECLEVTSWIAKEDGSKGVIMGVRHKEYTIEGVQFHPESILSAEGRGMFRNFLHMQGGTWAENERLQKAAQAQAANTKSDAPTPKKSNILQKIYAHRKAAVDAQKQIPSLRPSDLQAAYNLSIAPPQISLVDRLRNSPFDVALCAEIKRASPSKGVFALDIDAPSQARKYALAGASVISVLTEPEWFKGSIDDLRAVRQVLNGMPNRPAVLRKEFIFDEYQILEARLAGADTVLLIVKMLEYELLERLYKYSLSLGMEPLVEVQNTEEMATAIKLGAKVIGVNNRNLESFEVDLGTTGRLRSMVPSDTFLCALSGINTHQDVLDCKRDGVNGILVGEAIMRAPDATQFIRELCAGLTGPVPKSAAEPLLVKICGTRSAEAAAEAIKAGADLVGMIMVPGTKRCVDHETALSISQAVHMSKKTGSTEVSSQASKSARDFFNINAEIIRKRGPLLVGVFMNQPLEEVLEKQHLYDLDIVQLHGDEPLEWANLIPVPVVRKFKPGQVGLATRGYHAVPLLDSGAGSGTLLDLESVKKELEKDEQVTVLLAGGLEPSNVVETVKSLGPLSERVIGVDVSSGVEEGGKQSLEKIREFVKAAKSVR.

One can recognise a Glutamine amidotransferase type-1 domain in the interval 25-224 (NLILIDNYDS…LHMQGGTWAE (200 aa)). 76–78 (GPG) is a binding site for L-glutamine. Cys-104 serves as the catalytic Nucleophile; for GATase activity. L-glutamine-binding positions include Gln-108 and 154–155 (SL). Catalysis depends on for GATase activity residues His-198 and Glu-200. The indole-3-glycerol phosphate synthase stretch occupies residues 251 to 515 (ILQKIYAHRK…DATQFIRELC (265 aa)). An N-(5'-phosphoribosyl)anthranilate isomerase region spans residues 531–762 (LVKICGTRSA…EFVKAAKSVR (232 aa)).

Tetramer of two components I and two components II.

It carries out the reaction chorismate + L-glutamine = anthranilate + pyruvate + L-glutamate + H(+). The enzyme catalyses N-(5-phospho-beta-D-ribosyl)anthranilate = 1-(2-carboxyphenylamino)-1-deoxy-D-ribulose 5-phosphate. It catalyses the reaction 1-(2-carboxyphenylamino)-1-deoxy-D-ribulose 5-phosphate + H(+) = (1S,2R)-1-C-(indol-3-yl)glycerol 3-phosphate + CO2 + H2O. It participates in amino-acid biosynthesis; L-tryptophan biosynthesis; L-tryptophan from chorismate: step 1/5. The protein operates within amino-acid biosynthesis; L-tryptophan biosynthesis; L-tryptophan from chorismate: step 3/5. Its pathway is amino-acid biosynthesis; L-tryptophan biosynthesis; L-tryptophan from chorismate: step 4/5. In terms of biological role, trifunctional enzyme bearing the Gln amidotransferase (GATase) domain of anthranilate synthase, indole-glycerolphosphate synthase, and phosphoribosylanthranilate isomerase activities. In Neurospora crassa (strain ATCC 24698 / 74-OR23-1A / CBS 708.71 / DSM 1257 / FGSC 987), this protein is Multifunctional tryptophan biosynthesis protein (trp-1).